Consider the following 275-residue polypeptide: MKLKFTKMHGLGNDFIVIDAINQSVSLDPATIRRWADRHFGIGFDQLLVVEKPGESGDFRYRIFNADGGEVEQCGNGARCFARFVRDHDLTRKNTIRVETACGIIMPTVEENGEVSVDMGIPRFDPARIPFITQERALTYPLNVNDREIEISAVSMGNPHAVQIVPDIDLAPVTSEGPAIESHPFFPEKVNAGYMQIVDRTHIRLRVFERGTGETLACGTGACAAVVSGISRGLLDSEVQVTMRGGNLRIRWEGEDQPVWMTGPAVSVFEGTIDL.

Substrate is bound by residues asparagine 13, glutamine 46, and asparagine 65. Residue cysteine 74 is the Proton donor of the active site. Substrate contacts are provided by residues 75–76 (GN), asparagine 158, asparagine 191, and 209–210 (ER). Residue cysteine 218 is the Proton acceptor of the active site. Residue 219–220 (GT) participates in substrate binding.

The protein belongs to the diaminopimelate epimerase family. As to quaternary structure, homodimer.

Its subcellular location is the cytoplasm. It carries out the reaction (2S,6S)-2,6-diaminopimelate = meso-2,6-diaminopimelate. The protein operates within amino-acid biosynthesis; L-lysine biosynthesis via DAP pathway; DL-2,6-diaminopimelate from LL-2,6-diaminopimelate: step 1/1. Its function is as follows. Catalyzes the stereoinversion of LL-2,6-diaminopimelate (L,L-DAP) to meso-diaminopimelate (meso-DAP), a precursor of L-lysine and an essential component of the bacterial peptidoglycan. The sequence is that of Diaminopimelate epimerase from Nitrosomonas europaea (strain ATCC 19718 / CIP 103999 / KCTC 2705 / NBRC 14298).